A 196-amino-acid polypeptide reads, in one-letter code: Corrinoid adenosyltransferase CobA (196 aa).

36-42 (GNGKGKT) lines the ATP pocket.

It belongs to the Cob(I)alamin adenosyltransferase family. In terms of assembly, homodimer.

Its subcellular location is the cytoplasm. The enzyme catalyses 2 cob(II)yrinate a,c diamide + reduced [electron-transfer flavoprotein] + 2 ATP = 2 adenosylcob(III)yrinate a,c-diamide + 2 triphosphate + oxidized [electron-transfer flavoprotein] + 3 H(+). It catalyses the reaction 2 cob(II)alamin + reduced [electron-transfer flavoprotein] + 2 ATP = 2 adenosylcob(III)alamin + 2 triphosphate + oxidized [electron-transfer flavoprotein] + 3 H(+). It participates in cofactor biosynthesis; adenosylcobalamin biosynthesis; adenosylcobalamin from cob(II)yrinate a,c-diamide: step 2/7. Its function is as follows. Required for both de novo synthesis of the corrin ring for the assimilation of exogenous corrinoids. Participates in the adenosylation of a variety of incomplete and complete corrinoids. This Salmonella typhimurium (strain LT2 / SGSC1412 / ATCC 700720) protein is Corrinoid adenosyltransferase CobA (btuR).